Consider the following 62-residue polypeptide: Trypsin inhibitor MCI-3 (62 aa).

This sequence belongs to the protease inhibitor I13 (potato type I serine protease inhibitor) family.

This chain is Trypsin inhibitor MCI-3, found in Momordica charantia (Bitter gourd).